A 556-amino-acid polypeptide reads, in one-letter code: Glutamine--tRNA ligase (556 aa).

Residues 35-45 (PEPNGYLHIGH) carry the 'HIGH' region motif. Residues 36 to 38 (EPN) and 42 to 48 (HIGHAKS) each bind ATP. Aspartate 68 and tyrosine 213 together coordinate L-glutamine. ATP contacts are provided by residues threonine 232 and 262–263 (RL). A 'KMSKS' region motif is present at residues 269–273 (VTSKR).

Belongs to the class-I aminoacyl-tRNA synthetase family. As to quaternary structure, monomer.

It is found in the cytoplasm. It carries out the reaction tRNA(Gln) + L-glutamine + ATP = L-glutaminyl-tRNA(Gln) + AMP + diphosphate. The polypeptide is Glutamine--tRNA ligase (Pseudomonas aeruginosa (strain ATCC 15692 / DSM 22644 / CIP 104116 / JCM 14847 / LMG 12228 / 1C / PRS 101 / PAO1)).